Here is a 252-residue protein sequence, read N- to C-terminus: 2-succinyl-6-hydroxy-2,4-cyclohexadiene-1-carboxylate synthase (252 aa).

The protein belongs to the AB hydrolase superfamily. MenH family. As to quaternary structure, monomer.

The enzyme catalyses 5-enolpyruvoyl-6-hydroxy-2-succinyl-cyclohex-3-ene-1-carboxylate = (1R,6R)-6-hydroxy-2-succinyl-cyclohexa-2,4-diene-1-carboxylate + pyruvate. The protein operates within quinol/quinone metabolism; 1,4-dihydroxy-2-naphthoate biosynthesis; 1,4-dihydroxy-2-naphthoate from chorismate: step 3/7. Its pathway is quinol/quinone metabolism; menaquinone biosynthesis. Functionally, catalyzes a proton abstraction reaction that results in 2,5-elimination of pyruvate from 2-succinyl-5-enolpyruvyl-6-hydroxy-3-cyclohexene-1-carboxylate (SEPHCHC) and the formation of 2-succinyl-6-hydroxy-2,4-cyclohexadiene-1-carboxylate (SHCHC). The polypeptide is 2-succinyl-6-hydroxy-2,4-cyclohexadiene-1-carboxylate synthase (Salmonella newport (strain SL254)).